Consider the following 115-residue polypeptide: T cell receptor beta variable 12-5 (115 aa).

Residues 1-21 (MATRLLCCVVLCLLGEELIDA) form the signal peptide. The 94-residue stretch at 22-115 (RVTQTPRHKV…SAVYFCASGL (94 aa)) folds into the Ig-like domain. The cysteines at positions 42 and 111 are disulfide-linked.

Alpha-beta TR is a heterodimer composed of an alpha and beta chain; disulfide-linked. The alpha-beta TR is associated with the transmembrane signaling CD3 coreceptor proteins to form the TR-CD3 (TcR or TCR). The assembly of alpha-beta TR heterodimers with CD3 occurs in the endoplasmic reticulum where a single alpha-beta TR heterodimer associates with one CD3D-CD3E heterodimer, one CD3G-CD3E heterodimer and one CD247 homodimer forming a stable octameric structure. CD3D-CD3E and CD3G-CD3E heterodimers preferentially associate with TR alpha and TR beta chains, respectively. The association of the CD247 homodimer is the last step of TcR assembly in the endoplasmic reticulum and is required for transport to the cell surface.

It localises to the cell membrane. Functionally, v region of the variable domain of T cell receptor (TR) beta chain that participates in the antigen recognition. Alpha-beta T cell receptors are antigen specific receptors which are essential to the immune response and are present on the cell surface of T lymphocytes. Recognize peptide-major histocompatibility (MH) (pMH) complexes that are displayed by antigen presenting cells (APC), a prerequisite for efficient T cell adaptive immunity against pathogens. Binding of alpha-beta TR to pMH complex initiates TR-CD3 clustering on the cell surface and intracellular activation of LCK that phosphorylates the ITAM motifs of CD3G, CD3D, CD3E and CD247 enabling the recruitment of ZAP70. In turn ZAP70 phosphorylates LAT, which recruits numerous signaling molecules to form the LAT signalosome. The LAT signalosome propagates signal branching to three major signaling pathways, the calcium, the mitogen-activated protein kinase (MAPK) kinase and the nuclear factor NF-kappa-B (NF-kB) pathways, leading to the mobilization of transcription factors that are critical for gene expression and essential for T cell growth and differentiation. The T cell repertoire is generated in the thymus, by V-(D)-J rearrangement. This repertoire is then shaped by intrathymic selection events to generate a peripheral T cell pool of self-MH restricted, non-autoaggressive T cells. Post-thymic interaction of alpha-beta TR with the pMH complexes shapes TR structural and functional avidity. The polypeptide is T cell receptor beta variable 12-5 (Homo sapiens (Human)).